Here is a 2298-residue protein sequence, read N- to C-terminus: Protein Ycf2 (2298 aa).

1637 to 1644 provides a ligand contact to ATP; it reads GSIGTGRS.

This sequence belongs to the Ycf2 family.

It localises to the plastid. The protein resides in the chloroplast stroma. In terms of biological role, probable ATPase of unknown function. Its presence in a non-photosynthetic plant (Epifagus virginiana) and experiments in tobacco indicate that it has an essential function which is probably not related to photosynthesis. The sequence is that of Protein Ycf2 from Lotus japonicus (Lotus corniculatus var. japonicus).